The sequence spans 249 residues: 1-(5-phosphoribosyl)-5-[(5-phosphoribosylamino)methylideneamino] imidazole-4-carboxamide isomerase (249 aa).

Asp11 (proton acceptor) is an active-site residue. The Proton donor role is filled by Asp133.

Belongs to the HisA/HisF family.

The protein localises to the cytoplasm. It carries out the reaction 1-(5-phospho-beta-D-ribosyl)-5-[(5-phospho-beta-D-ribosylamino)methylideneamino]imidazole-4-carboxamide = 5-[(5-phospho-1-deoxy-D-ribulos-1-ylimino)methylamino]-1-(5-phospho-beta-D-ribosyl)imidazole-4-carboxamide. It functions in the pathway amino-acid biosynthesis; L-histidine biosynthesis; L-histidine from 5-phospho-alpha-D-ribose 1-diphosphate: step 4/9. The protein is 1-(5-phosphoribosyl)-5-[(5-phosphoribosylamino)methylideneamino] imidazole-4-carboxamide isomerase of Mannheimia succiniciproducens (strain KCTC 0769BP / MBEL55E).